Reading from the N-terminus, the 269-residue chain is Tryptophan synthase alpha chain (269 aa).

Catalysis depends on proton acceptor residues Glu50 and Asp61.

This sequence belongs to the TrpA family. Tetramer of two alpha and two beta chains.

The enzyme catalyses (1S,2R)-1-C-(indol-3-yl)glycerol 3-phosphate + L-serine = D-glyceraldehyde 3-phosphate + L-tryptophan + H2O. It functions in the pathway amino-acid biosynthesis; L-tryptophan biosynthesis; L-tryptophan from chorismate: step 5/5. Functionally, the alpha subunit is responsible for the aldol cleavage of indoleglycerol phosphate to indole and glyceraldehyde 3-phosphate. This chain is Tryptophan synthase alpha chain, found in Francisella tularensis subsp. tularensis (strain WY96-3418).